The following is a 465-amino-acid chain: 23S rRNA (uracil(1939)-C(5))-methyltransferase RlmD (465 aa).

The tract at residues M1–D20 is disordered. The TRAM domain occupies A12–D80. Positions 93, 99, 102, and 181 each coordinate [4Fe-4S] cluster. The S-adenosyl-L-methionine site is built by Q289, F318, N323, E339, N367, and D388. The Nucleophile role is filled by C421.

It belongs to the class I-like SAM-binding methyltransferase superfamily. RNA M5U methyltransferase family. RlmD subfamily.

It carries out the reaction uridine(1939) in 23S rRNA + S-adenosyl-L-methionine = 5-methyluridine(1939) in 23S rRNA + S-adenosyl-L-homocysteine + H(+). In terms of biological role, catalyzes the formation of 5-methyl-uridine at position 1939 (m5U1939) in 23S rRNA. The chain is 23S rRNA (uracil(1939)-C(5))-methyltransferase RlmD from Burkholderia thailandensis (strain ATCC 700388 / DSM 13276 / CCUG 48851 / CIP 106301 / E264).